A 780-amino-acid chain; its full sequence is Cullin-5 (780 aa).

Serine 34 carries the phosphoserine modification. Threonine 210 is subject to Phosphothreonine. Residues 711–772 (RILRTQEAII…HKYIRRDEAD (62 aa)) enclose the Cullin neddylation domain. Lysine 724 participates in a covalent cross-link: Glycyl lysine isopeptide (Lys-Gly) (interchain with G-Cter in NEDD8).

The protein belongs to the cullin family. Component of multiple cullin-5-RING E3 ubiquitin-protein ligase complexes (ECS complexes, also named CRL5 complexes) formed of CUL5, Elongin BC (ELOB and ELOC), RNF7/RBX2 and a variable SOCS box domain-containing protein as substrate-specific recognition component. CUL5-containing ECS complexes specifically contain RNF7/RBX2, and not RBX1, as catalytic subunit. Component of the ECS(ASB2) complex with the substrate recognition component ASB2. Component of the ECS(ASB6) complex with the substrate recognition component ASB6. Component of the ECS(ASB7) complex with the substrate recognition component ASB7. Component of the ECS(ASB9) complex with the substrate recognition component ASB9. Component of the ECS(ASB11) complex with the substrate recognition component ASB11. Component of the ECS(ASB12) complex with the substrate recognition component ASB12. Component of the ECS(LRRC41) complex with the substrate recognition component LRRC41. Component of the ECS(SOCS1) complex with the substrate recognition component SOCS1. Component of the ECS(SOCS2) complex with the substrate recognition component SOCS2. Component of the ECS(WSB1) complex with the substrate recognition subunit WSB1. Component of the ECS(SOCS3) complex with the substrate recognition component SOCS3. Component of the ECS(SOCS7) complex with the substrate recognition component SOCS7. Component of the ECS(SPSB1) complex with the substrate recognition component SPSB1. Component of the ECS(SPSB3) complex with the substrate recognition component SPSB3. Component of the ECS(SPSB2) complex with the substrate recognition component SPSB2. Component of the ECS(SPSB4) complex with the substrate recognition component SPSB4. Component of the ECS(RAB40) complex with the substrate recognition subunit RAB40A, RAB40B or RAB40C. Component of the ECS(KLHDC1) complex with the substrate recognition component KLHDC1. Component of the ECS(PCMTD1) complex with the substrate recognition subunit PCMTD1. May also form complexes containing RBX1 and ELOA or VHL; additional evidence is however required to confirm this result in vivo. Interacts (when neddylated) with ARIH2; leading to activate the E3 ligase activity of ARIH2. Interacts with ERCC6; the interaction is induced by DNA damaging agents or inhibitors of RNA polymerase II elongation. Interacts with ELOA (via the BC-box). Interacts (unneddylated form) with DCUN1D1, DCUN1D2, DCUN1D3, DCUN1D4 and DCUN1D5; these interactions promote the cullin neddylation. In terms of processing, neddylated; which enhances the ubiquitination activity of ECS complexes and prevents binding of the inhibitor CAND1. Deneddylated via its interaction with the COP9 signalosome (CSN).

The protein localises to the nucleus. The protein operates within protein modification; protein ubiquitination. Core component of multiple cullin-5-RING E3 ubiquitin-protein ligase complexes (ECS complexes, also named CRL5 complexes), which mediate the ubiquitination and subsequent proteasomal degradation of target proteins. Acts a scaffold protein that contributes to catalysis through positioning of the substrate and the ubiquitin-conjugating enzyme. The functional specificity of the E3 ubiquitin-protein ligase complex depends on the variable SOCS box-containing substrate recognition component. Acts as a key regulator of neuron positioning during cortex development: component of various SOCS-containing ECS complexes, such as the ECS(SOCS7) complex, that regulate reelin signaling by mediating ubiquitination and degradation of DAB1. ECS(SOCS1) seems to direct ubiquitination of JAK2. The ECS(SOCS2) complex mediates the ubiquitination and subsequent proteasomal degradation of phosphorylated EPOR and GHR. The ECS(SPSB3) complex catalyzes ubiquitination of nuclear CGAS. ECS(KLHDC1) complex is part of the DesCEND (destruction via C-end degrons) pathway and mediates ubiquitination and degradation of truncated SELENOS selenoprotein produced by failed UGA/Sec decoding, which ends with a glycine. The ECS(ASB9) complex mediates ubiquitination and degradation of CKB. As part of some ECS complex, promotes 'Lys-11'-linked ubiquitination and degradation of BTRC. As part of a multisubunit ECS complex, polyubiquitinates monoubiquitinated POLR2A. As part of the ECS(RAB40C) complex, mediates ANKRD28 ubiquitination and degradation, thereby regulating protein phosphatase 6 (PP6) complex activity and focal adhesion assembly during cell migration. As part of the ECS(RAB40A) complex, mediates RHOU 'Lys-48'-linked ubiquitination and degradation, thus inhibiting focal adhesion disassembly during cell migration. As part of the ECS(RAB40B) complex, mediates LIMA1/EPLIN and RAP2 ubiquitination, thereby regulating actin cytoskeleton dynamics and stress fiber formation during cell migration. May form a cell surface vasopressin receptor. This is Cullin-5 from Rattus norvegicus (Rat).